Consider the following 424-residue polypeptide: Serine hydroxymethyltransferase (424 aa).

(6S)-5,6,7,8-tetrahydrofolate contacts are provided by residues leucine 118 and 122-124 (GHL). The residue at position 227 (lysine 227) is an N6-(pyridoxal phosphate)lysine. 351 to 353 (SPF) serves as a coordination point for (6S)-5,6,7,8-tetrahydrofolate.

The protein belongs to the SHMT family. In terms of assembly, homodimer. Pyridoxal 5'-phosphate is required as a cofactor.

Its subcellular location is the cytoplasm. It carries out the reaction (6R)-5,10-methylene-5,6,7,8-tetrahydrofolate + glycine + H2O = (6S)-5,6,7,8-tetrahydrofolate + L-serine. It participates in one-carbon metabolism; tetrahydrofolate interconversion. Its pathway is amino-acid biosynthesis; glycine biosynthesis; glycine from L-serine: step 1/1. Its function is as follows. Catalyzes the reversible interconversion of serine and glycine with tetrahydrofolate (THF) serving as the one-carbon carrier. This reaction serves as the major source of one-carbon groups required for the biosynthesis of purines, thymidylate, methionine, and other important biomolecules. Also exhibits THF-independent aldolase activity toward beta-hydroxyamino acids, producing glycine and aldehydes, via a retro-aldol mechanism. This Thermosipho melanesiensis (strain DSM 12029 / CIP 104789 / BI429) protein is Serine hydroxymethyltransferase.